The chain runs to 636 residues: Chaperone protein DnaK (636 aa).

A Phosphothreonine; by autocatalysis modification is found at Thr-197. Residues 596–607 are compositionally biased toward low complexity; that stretch reads LYQQAQEQQQSG. The disordered stretch occupies residues 596-636; that stretch reads LYQQAQEQQQSGSSGGSSDEDVVEDAEIVDEEDEEKRDDNR. Over residues 613–636 the composition is skewed to acidic residues; sequence SDEDVVEDAEIVDEEDEEKRDDNR.

This sequence belongs to the heat shock protein 70 family.

Its function is as follows. Acts as a chaperone. In Rubrobacter xylanophilus (strain DSM 9941 / JCM 11954 / NBRC 16129 / PRD-1), this protein is Chaperone protein DnaK.